The sequence spans 833 residues: 3-hydroxy-3-methylglutaryl-coenzyme A reductase (833 aa).

4 consecutive transmembrane segments (helical) span residues Phe-10–Val-32, Tyr-91–Ser-117, Leu-160–Val-180, and Ser-301–Phe-321. Residues Glu-322 to Ser-419 are linker. Residues Lys-347–Thr-374 are disordered. The span at Asp-354–Glu-365 shows a compositional bias: polar residues. Positions His-420–Leu-833 are catalytic. Residues Glu-504 and Lys-635 each act as charge relay system in the active site. The N-linked (GlcNAc...) asparagine glycan is linked to Asn-680. The active-site Charge relay system is Asp-711. N-linked (GlcNAc...) asparagine glycans are attached at residues Asn-715 and Asn-720. The Proton donor role is filled by His-809. N-linked (GlcNAc...) asparagine glycosylation is found at Asn-813 and Asn-825.

The protein belongs to the HMG-CoA reductase family.

It localises to the endoplasmic reticulum membrane. The catalysed reaction is (R)-mevalonate + 2 NADP(+) + CoA = (3S)-3-hydroxy-3-methylglutaryl-CoA + 2 NADPH + 2 H(+). It participates in metabolic intermediate biosynthesis; (R)-mevalonate biosynthesis; (R)-mevalonate from acetyl-CoA: step 3/3. Its activity is regulated as follows. The activity of HMG-CoA-reductase is suppressed by exogenous mevalonate. Its function is as follows. Synthesis of mevalonate for the production of non-sterol isoprenoids, which are essential for growth differentiation. The polypeptide is 3-hydroxy-3-methylglutaryl-coenzyme A reductase (HMGR) (Agrotis ipsilon (Black cutworm moth)).